We begin with the raw amino-acid sequence, 119 residues long: Protein TusC (119 aa).

The protein belongs to the DsrF/TusC family. In terms of assembly, heterohexamer, formed by a dimer of trimers. The hexameric TusBCD complex contains 2 copies each of TusB, TusC and TusD. The TusBCD complex interacts with TusE.

It localises to the cytoplasm. In terms of biological role, part of a sulfur-relay system required for 2-thiolation of 5-methylaminomethyl-2-thiouridine (mnm(5)s(2)U) at tRNA wobble positions. The protein is Protein TusC of Klebsiella pneumoniae subsp. pneumoniae (strain ATCC 700721 / MGH 78578).